Consider the following 479-residue polypeptide: MTTTNQEPILKATHFRSEGDVNTTPAREKWNESLNDDATQAMLKRDSDVFLHQAMSTPCLDTLTAAEGIYIQDATGKKYMDFHGNNVHQLGYGHPHIINKVTQQMASLPFSPRRFTNETAVQCAEKLTQICGGDLNRVLFAPGGTSVIGMALKLARHVTNNFKVVSLWDSFHGASLDAISVGGEACFREGMGPLMAGVERIPPAVSYRGAFPLRDSLSLRGQNSGDANETACDVHYADYLEYVIEKEGGIGAFIAEAVRNTDVQVPSKAYWKRIREICDKHNVMLIIDDIPNGMGRSGEWFTHQAFDIEPDILCIGKGFGGGLVPIAAMITKDKYNTAAQVSLGHYTHEKSPIGCAAALATMEVIEQENLLEKVQADSAFVREQLLQMKEEYPVIGDIRGIGLLWGVELVTDHITKTRAFDEAEAVLYQCLNEGLSFKVSQGNVIQLSPPLIISRNELEVALSVFEKAIAKVCKDFEYL.

N6-(pyridoxal phosphate)lysine is present on K317.

This sequence belongs to the class-III pyridoxal-phosphate-dependent aminotransferase family. Requires pyridoxal 5'-phosphate as cofactor.

The catalysed reaction is (1R)-(2-amino-1-hydroxyethyl)phosphonate = phosphonoacetaldehyde + NH4(+). In terms of biological role, involved in phosphonate degradation. Functions as a lyase that catalyzes an elimination reaction on the naturally occurring compound (R)-1-hydroxy-2-aminoethylphosphonate ((R)-HAEP), releasing ammonia and generating phosphonoacetaldehyde (PAA), which can be then hydrolyzed by PhnX, encoded by an adjacent gene. Thus, catalyzes a reaction that serves to funnel (R)-HAEP into the hydrolytic pathway for aminoethylphosphonate (AEP, the most common biogenic phosphonate) degradation, expanding the scope and the usefulness of the pathway itself. Is not active toward the (S) enantiomer of HAEP or other HAEP-related compounds such as ethanolamine and D,L-isoserine, indicating a very high substrate specificity. The sequence is that of (R)-1-hydroxy-2-aminoethylphosphonate ammonia-lyase from Vibrio splendidus (strain 12B01).